Consider the following 175-residue polypeptide: uncharacterized protein (175 aa).

Residues 1 to 17 are compositionally biased toward basic and acidic residues; that stretch reads MKVEGGESMHESEEGRD. The tract at residues 1–21 is disordered; that stretch reads MKVEGGESMHESEEGRDVPNG.

This is an uncharacterized protein from Bacillus thuringiensis subsp. kurstaki.